We begin with the raw amino-acid sequence, 327 residues long: dTDP-4-dehydrorhamnose reductase (327 aa).

Residues 1–22 form a disordered region; the sequence is MDLINGMGTSPGYWRTPREPGN. NADH contacts are provided by residues 43–45, 69–70, and 91–93; these read GMV, DI, and AYT. NADPH contacts are provided by residues 44–45, 69–70, and 91–93; these read MV, DI, and AYT. 132–133 is a binding site for dTDP-beta-L-rhamnose; it reads TD. NADH is bound by residues Y157 and K161. Residues Y157 and K161 each coordinate NADPH. Y157 serves as the catalytic Proton donor/acceptor. A dTDP-beta-L-rhamnose-binding site is contributed by W182. The segment covering 264-276 has biased composition (basic and acidic residues); it reads PERVRPCGSDRHP. Residues 264–292 are disordered; it reads PERVRPCGSDRHPRPAPRPSYTVLSSQRS.

It belongs to the dTDP-4-dehydrorhamnose reductase family. Requires Mg(2+) as cofactor.

It carries out the reaction dTDP-beta-L-rhamnose + NADP(+) = dTDP-4-dehydro-beta-L-rhamnose + NADPH + H(+). It functions in the pathway carbohydrate biosynthesis; dTDP-L-rhamnose biosynthesis. Functionally, involved in the biosynthesis of the dTDP-L-rhamnose which is a component of the critical linker, D-N-acetylglucosamine-L-rhamnose disaccharide, which connects the galactan region of arabinogalactan to peptidoglycan via a phosphodiester linkage. Catalyzes the reduction of dTDP-6-deoxy-L-lyxo-4-hexulose to yield dTDP-L-rhamnose. The polypeptide is dTDP-4-dehydrorhamnose reductase (Mycolicibacterium smegmatis (strain ATCC 700084 / mc(2)155) (Mycobacterium smegmatis)).